Consider the following 1186-residue polypeptide: Pumilio homolog 1 (1186 aa).

Serine 2 bears the N-acetylserine mark. Serine 19 is modified (phosphoserine). Residues leucine 22–glycine 73 form a disordered region. Over residues glutamine 45–alanine 58 the composition is skewed to low complexity. Phosphoserine is present on residues serine 75, serine 98, and serine 106. Phosphothreonine is present on threonine 112. Serine 124, serine 159, serine 197, serine 209, and serine 229 each carry phosphoserine. Residues serine 233–glutamate 272 are disordered. Residues asparagine 250–glutamate 272 show a composition bias toward basic and acidic residues. Serine 305 bears the Phosphoserine mark. A compositionally biased stretch (low complexity) spans threonine 485–glutamine 502. 2 disordered regions span residues threonine 485–threonine 524 and alanine 613–asparagine 648. Residues arginine 511–threonine 524 are compositionally biased toward polar residues. Threonine 514 carries the post-translational modification Phosphothreonine. The segment covering glutamine 626 to asparagine 639 has biased composition (low complexity). 2 positions are modified to phosphoserine: serine 709 and serine 714. Residues glycine 742–asparagine 773 form a disordered region. A compositionally biased stretch (low complexity) spans leucine 763–asparagine 773. Omega-N-methylarginine is present on arginine 796. A phosphoserine mark is found at serine 806 and serine 822. The PUM-HD domain occupies glycine 828–tyrosine 1168. Pumilio repeat units follow at residues glutamate 848 to asparagine 883, glutamate 884 to glutamate 919, arginine 920 to arginine 955, glutamate 956 to aspartate 991, alanine 992 to glutamate 1027, glutamate 1028 to alanine 1063, glutamate 1064 to aspartate 1099, and threonine 1103 to histidine 1142. Residues serine 863–glutamine 867 are adenine-nucleotide binding in RNA target. Positions asparagine 899 to glutamine 903 are uracil-nucleotide binding in RNA target. The interval cysteine 935–glutamine 939 is adenine-nucleotide binding in RNA target. The interval asparagine 971–glutamine 975 is non-specific-nucleotide binding in RNA target. The segment at cysteine 1007–glutamine 1011 is adenine-nucleotide binding in RNA target. The tract at residues asparagine 1043–glutamine 1047 is uracil-nucleotide binding in RNA target. The guanine-nucleotide binding in RNA target stretch occupies residues serine 1079–glutamate 1083. Positions asparagine 1122 to glutamine 1126 are uracil-nucleotide binding in RNA target.

As to quaternary structure, recruits the CCR4-POP2-NOT deadenylase leading to translational inhibition and mRNA degradation. In case of viral infection, interacts with DHX58. Interacts with TRIM71 (via NHL repeats) in an RNA-dependent manner. In terms of processing, phosphorylation at Ser-714 promotes RNA-binding activity. Following growth factor stimulation phosphorylated at Ser-714, promoting binding to the 3'-UTR of CDKN1B/p27 mRNA. In terms of tissue distribution, expressed in brain, heart, kidney, muscle, intestine and stomach. Not expressed in cerebellum, corpus callosum, caudate nucleus, hippocampus, medulla oblongata and putamen. Expressed in all fetal tissues tested.

It is found in the cytoplasm. It localises to the P-body. The protein localises to the cytoplasmic granule. Functionally, sequence-specific RNA-binding protein that acts as a post-transcriptional repressor by binding the 3'-UTR of mRNA targets. Binds to an RNA consensus sequence, the Pumilio Response Element (PRE), 5'-UGUANAUA-3', that is related to the Nanos Response Element (NRE). Mediates post-transcriptional repression of transcripts via different mechanisms: acts via direct recruitment of the CCR4-POP2-NOT deadenylase leading to translational inhibition and mRNA degradation. Also mediates deadenylation-independent repression by promoting accessibility of miRNAs. Following growth factor stimulation, phosphorylated and binds to the 3'-UTR of CDKN1B/p27 mRNA, inducing a local conformational change that exposes miRNA-binding sites, promoting association of miR-221 and miR-222, efficient suppression of CDKN1B/p27 expression, and rapid entry to the cell cycle. Acts as a post-transcriptional repressor of E2F3 mRNAs by binding to its 3'-UTR and facilitating miRNA regulation. Represses a program of genes necessary to maintain genomic stability such as key mitotic, DNA repair and DNA replication factors. Its ability to repress those target mRNAs is regulated by the lncRNA NORAD (non-coding RNA activated by DNA damage) which, due to its high abundance and multitude of PUMILIO binding sites, is able to sequester a significant fraction of PUM1 and PUM2 in the cytoplasm. Involved in neuronal functions by regulating ATXN1 mRNA levels: acts by binding to the 3'-UTR of ATXN1 transcripts, leading to their down-regulation independently of the miRNA machinery. Plays a role in cytoplasmic sensing of viral infection. In testis, acts as a post-transcriptional regulator of spermatogenesis by binding to the 3'-UTR of mRNAs coding for regulators of p53/TP53. Involved in embryonic stem cell renewal by facilitating the exit from the ground state: acts by targeting mRNAs coding for naive pluripotency transcription factors and accelerates their down-regulation at the onset of differentiation. Binds specifically to miRNA MIR199A precursor, with PUM2, regulates miRNA MIR199A expression at a postranscriptional level. In Homo sapiens (Human), this protein is Pumilio homolog 1.